A 1230-amino-acid chain; its full sequence is Protein transport protein Sec31A (1230 aa).

7 WD repeats span residues 4–47 (KEID…EIFE), 64–111 (SSSH…AGDK), 120–160 (KHTG…TPMT), 166–206 (QPPE…PIIK), 209–254 (DHSN…SPLR), 258–298 (NHAR…VLYE), and 301–342 (TNTQ…DGLR). The tract at residues 161–470 (PGAKTQPPED…IEASQTEFEK (310 aa)) is interaction with SEC13. The WD 8; interaction with SEC13 repeat unit spans residues 397–429 (SFSFGGKLVTFESVAVPLQQGAEQQRRQPVFIS). At arginine 423 the chain carries Asymmetric dimethylarginine. A phosphoserine mark is found at serine 526 and serine 531. A Glycyl lysine isopeptide (Lys-Gly) (interchain with G-Cter in ubiquitin) cross-link involves residue lysine 646. Disordered regions lie at residues 789 to 905 (QGKP…ASNA) and 924 to 1104 (MYTA…PIGN). Residue serine 798 is modified to Phosphoserine. Residues 799–1123 (SQSPYERQPL…TEKITKKPIP (325 aa)) form an interaction with PDCD6 region. An ALG-2-binding site motif-2 (ABS-2) motif is present at residues 841-847 (GFIMQGN). The segment covering 866 to 876 (QLPPYPQPQPY) has biased composition (pro residues). Low complexity-rich tracts occupy residues 930 to 940 (ASSPTSSSAAS) and 959 to 975 (PSSS…GTPP). Composition is skewed to polar residues over residues 981–995 (PASQ…QDQA) and 1033–1064 (PIMN…SFPQ). The residue at position 1171 (threonine 1171) is a Phosphothreonine. The residue at position 1173 (serine 1173) is a Phosphoserine. A Glycyl lysine isopeptide (Lys-Gly) (interchain with G-Cter in ubiquitin) cross-link involves residue lysine 1227.

The protein belongs to the WD repeat SEC31 family. As to quaternary structure, COPII is composed of at least 5 proteins: the SEC23/24 complex, the SEC13/31 complex and SAR1. SEC13 and SEC31 make a 2:2 tetramer that forms the edge element of the COPII outer coat. The tetramer self-assembles in multiple copies to form the complete polyhedral cage. Interacts (via WD 8) with SEC13. Interacts with PDCD6; interaction takes place in response to cytosolic calcium increase and leads to bridge together the BCR(KLHL12) complex and SEC31A, leading to monoubiquitination. Interacts with KLHL12. In terms of processing, monoubiquitinated by the BCR(KLHL12) E3 ubiquitin ligase complex, leading to regulate the size of COPII coats.

Its subcellular location is the cytoplasm. The protein resides in the cytoplasmic vesicle. The protein localises to the COPII-coated vesicle membrane. It localises to the endoplasmic reticulum membrane. Component of the coat protein complex II (COPII) which promotes the formation of transport vesicles from the endoplasmic reticulum (ER). The coat has two main functions, the physical deformation of the endoplasmic reticulum membrane into vesicles and the selection of cargo molecules. The protein is Protein transport protein Sec31A (Sec31a) of Mus musculus (Mouse).